The sequence spans 164 residues: Phosphopantetheine adenylyltransferase (164 aa).

Residue Thr-9 coordinates substrate. ATP contacts are provided by residues 9 to 10 and His-17; that span reads TF. 3 residues coordinate substrate: Lys-41, Leu-78, and Arg-92. ATP-binding positions include 93–95, Glu-103, and 128–134; these read GLR and RQAIASK.

The protein belongs to the bacterial CoaD family. As to quaternary structure, homohexamer. The cofactor is Mg(2+).

The protein localises to the cytoplasm. The enzyme catalyses (R)-4'-phosphopantetheine + ATP + H(+) = 3'-dephospho-CoA + diphosphate. It participates in cofactor biosynthesis; coenzyme A biosynthesis; CoA from (R)-pantothenate: step 4/5. Its function is as follows. Reversibly transfers an adenylyl group from ATP to 4'-phosphopantetheine, yielding dephospho-CoA (dPCoA) and pyrophosphate. The sequence is that of Phosphopantetheine adenylyltransferase from Paracoccus denitrificans (strain Pd 1222).